Reading from the N-terminus, the 376-residue chain is Cytochrome b (376 aa).

4 helical membrane-spanning segments follow: residues tyrosine 28–serine 48, tryptophan 72–leucine 94, serine 107–valine 127, and phenylalanine 169–phenylalanine 189. Heme b-binding residues include histidine 78 and histidine 92. Residues histidine 173 and histidine 187 each coordinate heme b. Histidine 192 serves as a coordination point for a ubiquinone. The next 4 membrane-spanning stretches (helical) occupy residues leucine 214–isoleucine 234, isoleucine 274–leucine 294, valine 317–proline 337, and isoleucine 340–leucine 360.

It belongs to the cytochrome b family. As to quaternary structure, the main subunits of complex b-c1 are: cytochrome b, cytochrome c1 and the Rieske protein. Heme b serves as cofactor.

It is found in the mitochondrion inner membrane. In terms of biological role, component of the ubiquinol-cytochrome c reductase complex (complex III or cytochrome b-c1 complex) that is part of the mitochondrial respiratory chain. The b-c1 complex mediates electron transfer from ubiquinol to cytochrome c. Contributes to the generation of a proton gradient across the mitochondrial membrane that is then used for ATP synthesis. The polypeptide is Cytochrome b (MT-CYB) (Plasmodium chabaudi).